We begin with the raw amino-acid sequence, 307 residues long: S-methyl-5'-thioadenosine phosphorylase (307 aa).

Residues Thr20, 62 to 63 (RH), and 95 to 96 (SA) contribute to the phosphate site. Residue Met197 participates in substrate binding. Ser198 is a phosphate binding site. 221–223 (DYD) provides a ligand contact to substrate.

Belongs to the PNP/MTAP phosphorylase family. MTAP subfamily. Homotrimer.

Its subcellular location is the cytoplasm. It localises to the nucleus. The catalysed reaction is S-methyl-5'-thioadenosine + phosphate = 5-(methylsulfanyl)-alpha-D-ribose 1-phosphate + adenine. The protein operates within amino-acid biosynthesis; L-methionine biosynthesis via salvage pathway; S-methyl-5-thio-alpha-D-ribose 1-phosphate from S-methyl-5'-thioadenosine (phosphorylase route): step 1/1. Functionally, catalyzes the reversible phosphorylation of S-methyl-5'-thioadenosine (MTA) to adenine and 5-methylthioribose-1-phosphate. Involved in the breakdown of MTA, a major by-product of polyamine biosynthesis. Responsible for the first step in the methionine salvage pathway after MTA has been generated from S-adenosylmethionine. Has broad substrate specificity with 6-aminopurine nucleosides as preferred substrates. The chain is S-methyl-5'-thioadenosine phosphorylase from Fusarium vanettenii (strain ATCC MYA-4622 / CBS 123669 / FGSC 9596 / NRRL 45880 / 77-13-4) (Fusarium solani subsp. pisi).